The following is a 68-amino-acid chain: Large ribosomal subunit protein bL35 (68 aa).

Belongs to the bacterial ribosomal protein bL35 family.

This chain is Large ribosomal subunit protein bL35, found in Onion yellows phytoplasma (strain OY-M).